The chain runs to 118 residues: IgW heavy chain V region W26 (118 aa).

The region spanning 1–109 is the Ig-like domain; it reads NIVLTQPESA…PQWGYWGSGT (109 aa). C22 and C93 are joined by a disulfide.

As to expression, expressed mainly in lymphoid tissues including spleen, epigonal organ and circulating lymphocytes.

The protein is IgW heavy chain V region W26 of Heterodontus francisci (Horn shark).